Reading from the N-terminus, the 380-residue chain is Cytochrome b (380 aa).

4 helical membrane passes run 33–53, 77–98, 113–133, and 178–198; these read FGSL…FLAM, WLIR…YMHI, WNIG…GYVL, and FFAF…LHLL. Heme b-binding residues include His83 and His97. The heme b site is built by His182 and His196. Residue His201 participates in a ubiquinone binding. Transmembrane regions (helical) follow at residues 226–246, 288–308, 320–340, and 347–367; these read YKDL…ALFA, LGGV…PILH, LTQF…WIGG, and FIII…VLAP.

The protein belongs to the cytochrome b family. As to quaternary structure, the cytochrome bc1 complex contains 3 respiratory subunits (MT-CYB, CYC1 and UQCRFS1), 2 core proteins (UQCRC1 and UQCRC2) and probably 6 low-molecular weight proteins. The cofactor is heme b.

It is found in the mitochondrion inner membrane. In terms of biological role, component of the ubiquinol-cytochrome c reductase complex (complex III or cytochrome b-c1 complex) that is part of the mitochondrial respiratory chain. The b-c1 complex mediates electron transfer from ubiquinol to cytochrome c. Contributes to the generation of a proton gradient across the mitochondrial membrane that is then used for ATP synthesis. The polypeptide is Cytochrome b (mt-cyb) (Salmo salar (Atlantic salmon)).